Consider the following 860-residue polypeptide: Translation initiation factor IF-2 (860 aa).

Over residues 1–11 the composition is skewed to basic and acidic residues; sequence MSDTKSGDDKT. The segment at 1–265 is disordered; that stretch reads MSDTKSGDDK…MRRRQEKFKR (265 aa). Over residues 79–88 the composition is skewed to low complexity; the sequence is AAPVVQEAPK. The span at 110–183 shows a compositional bias: basic and acidic residues; the sequence is SRSEMEARRR…RRRAEEEARR (74 aa). Residues 358 to 525 enclose the tr-type G domain; it reads PRPPVVTIMG…AILLQAEILD (168 aa). The interval 367–374 is G1; sequence GHVDHGKT. Position 367 to 374 (367 to 374) interacts with GTP; it reads GHVDHGKT. The segment at 392-396 is G2; that stretch reads GITQH. Positions 413–416 are G3; sequence DTPG. Residues 413 to 417 and 467 to 470 each bind GTP; these read DTPGH and NKID. Positions 467–470 are G4; it reads NKID. Positions 503 to 505 are G5; the sequence is SAT.

Belongs to the TRAFAC class translation factor GTPase superfamily. Classic translation factor GTPase family. IF-2 subfamily.

It is found in the cytoplasm. Its function is as follows. One of the essential components for the initiation of protein synthesis. Protects formylmethionyl-tRNA from spontaneous hydrolysis and promotes its binding to the 30S ribosomal subunits. Also involved in the hydrolysis of GTP during the formation of the 70S ribosomal complex. The sequence is that of Translation initiation factor IF-2 from Mesorhizobium japonicum (strain LMG 29417 / CECT 9101 / MAFF 303099) (Mesorhizobium loti (strain MAFF 303099)).